A 635-amino-acid polypeptide reads, in one-letter code: Protein phosphatase PP2A regulatory subunit A (635 aa).

Positions Met1–Ser27 are enriched in low complexity. The disordered stretch occupies residues Met1–Asn33. HEAT repeat units follow at residues Glu34–Arg72, Thr73–Gln111, Tyr112–Gln150, Leu151–Ser189, Leu190–Leu228, Gly229–Gly273, Asp274–Ala316, Tyr317–Ile356, Ile357–Gln395, Val396–Leu434, Leu435–Phe473, Phe474–Trp512, Cys513–Val553, Val554–Leu598, and Ile599–Leu632.

This sequence belongs to the phosphatase 2A regulatory subunit A family. As to quaternary structure, PP2A exists in several trimeric forms, all of which consist of a core composed of a catalytic subunit associated with a 65 kDa regulatory subunit (PR65) (subunit A). The core complex associates with a third, variable subunit (subunit B), which confers distinct properties to the holoenzyme.

Its function is as follows. Phosphatase 2A affects a variety of biological processes in the cell such as transcription, cell cycle progression and cellular morphogenesis, and provides an initial identification of critical substrates for this phosphatase. The regulatory subunit may direct the catalytic subunit to distinct, albeit overlapping, subsets of substrates. The protein is Protein phosphatase PP2A regulatory subunit A (TPD3) of Saccharomyces cerevisiae (strain ATCC 204508 / S288c) (Baker's yeast).